A 167-amino-acid polypeptide reads, in one-letter code: RNA pyrophosphohydrolase (167 aa).

The 151-residue stretch at 8–158 folds into the Nudix hydrolase domain; it reads PYRRNVGAML…KRDIYRTLVR (151 aa). The Nudix box signature appears at 49–70; the sequence is GGIDADEDPEEAVLRELREEIG.

This sequence belongs to the Nudix hydrolase family. RppH subfamily. The cofactor is a divalent metal cation.

Functionally, accelerates the degradation of transcripts by removing pyrophosphate from the 5'-end of triphosphorylated RNA, leading to a more labile monophosphorylated state that can stimulate subsequent ribonuclease cleavage. This Gluconacetobacter diazotrophicus (strain ATCC 49037 / DSM 5601 / CCUG 37298 / CIP 103539 / LMG 7603 / PAl5) protein is RNA pyrophosphohydrolase.